Here is a 138-residue protein sequence, read N- to C-terminus: MRTLWIVAVLLVSVEGHLLQFNKMIKIMTRKNAFPFYTSYGCYCGWGGRGWPKDATDSCCFVHDCCYQKLTGCSPKWDIYPYSWKTGVIICGEGTPCEKEICECDRAAAVCLGENLRTYKTKYMFYPDFLCKKPSKQC.

A signal peptide spans 1-16; sequence MRTLWIVAVLLVSVEG. Disulfide bonds link cysteine 42–cysteine 131, cysteine 44–cysteine 60, cysteine 59–cysteine 111, cysteine 65–cysteine 138, cysteine 66–cysteine 104, cysteine 73–cysteine 97, and cysteine 91–cysteine 102. Positions 43, 45, and 47 each coordinate Ca(2+). Residue histidine 63 is part of the active site. Residue aspartate 64 coordinates Ca(2+). Aspartate 105 is an active-site residue.

It depends on Ca(2+) as a cofactor. Expressed by the venom gland.

The protein resides in the secreted. The enzyme catalyses a 1,2-diacyl-sn-glycero-3-phosphocholine + H2O = a 1-acyl-sn-glycero-3-phosphocholine + a fatty acid + H(+). In terms of biological role, snake venom phospholipase A2 (PLA2) that inhibits neuromuscular transmission by blocking acetylcholine release from the nerve termini. PLA2 catalyzes the calcium-dependent hydrolysis of the 2-acyl groups in 3-sn-phosphoglycerides. In Deinagkistrodon acutus (Hundred-pace snake), this protein is Basic phospholipase A2 DAV-N6.